Reading from the N-terminus, the 151-residue chain is MKAIFIILAILMVTQAFKMTSKVNTKLQSQIQSKFQSKNKLASTFQTSSQLKYYCWEEPYTSSITGCSTSLACYEASDCSVTGNDQDKCNNVGQNMIDKFFELWGVCINDYETCLQYVDRAWIHYSDSEFCGCTNPEQESAFRDAMDCLQF.

Residues 1–16 form the signal peptide; that stretch reads MKAIFIILAILMVTQA. Residues 17-52 constitute a propeptide that is removed on maturation; it reads FKMTSKVNTKLQSQIQSKFQSKNKLASTFQTSSQLK.

Its subcellular location is the secreted. Its function is as follows. Mating ciliate pheromones (or gamones) are diffusible extracellular communication signals that distinguish different intraspecific classes of cells commonly referred to as 'mating types'. They prepare the latter for conjugation by changing their cell surface properties. This is Mating pheromone 3 (PHR3) from Euplotoides octocarinatus (Freshwater ciliate).